Here is a 309-residue protein sequence, read N- to C-terminus: DnaJ homolog subfamily B member 7 (309 aa).

One can recognise a J domain in the interval 3-69 (DYYEVLGLQR…EKRDIYDKYG (67 aa)). A disordered region spans residues 282 to 309 (FSAGVKEGGKRKKKKRKEVQKKSTKRNC). Residues 290-309 (GKRKKKKRKEVQKKSTKRNC) show a composition bias toward basic residues.

Its function is as follows. Probably acts as a co-chaperone. The sequence is that of DnaJ homolog subfamily B member 7 (DNAJB7) from Homo sapiens (Human).